A 371-amino-acid polypeptide reads, in one-letter code: NDMA-dependent alcohol dehydrogenase (371 aa).

Zn(2+) contacts are provided by Cys-40, His-61, Cys-91, Cys-94, Cys-97, Cys-105, and Cys-167.

Belongs to the zinc-containing alcohol dehydrogenase family. As to quaternary structure, homotrimer. It depends on NADH as a cofactor.

The catalysed reaction is N,N-dimethyl-4-nitrosoaniline + a primary alcohol = 4-(hydroxylamino)-N,N-dimethylaniline + an aldehyde. It catalyses the reaction ethanol + A = acetaldehyde + AH2. Its activity is regulated as follows. Inhibited by trans-4-(N,N-dimethylamino)-cinnamaldehyde through direct binding to the catalytic zinc ion in a substrate-like geometry. Isobutyramide acts as a competitive inhibitor with respect to the electron acceptor NDMA. Acetaldehyde, AMP, ADP, ATP, as well as CuSO(4), FeSO(4), HgCl(2), NiCl(2), ZnSO(4), KCN, and NaN(3) are additional inhibitors of the catalytic activity. Its function is as follows. Catalytically different from common alcohol dehydrogenases. Effective in oxidizing ethanol, other primary alcohols and benzylalcohol only in the presence of p-nitroso-N,N-dimethylaniline (NDMA) as an electron acceptor. NADH acts as a cofactor here instead as a coenzyme. This chain is NDMA-dependent alcohol dehydrogenase, found in Amycolatopsis methanolica.